A 231-amino-acid chain; its full sequence is Large ribosomal subunit protein uL1 (231 aa).

It belongs to the universal ribosomal protein uL1 family. In terms of assembly, part of the 50S ribosomal subunit.

In terms of biological role, binds directly to 23S rRNA. The L1 stalk is quite mobile in the ribosome, and is involved in E site tRNA release. Its function is as follows. Protein L1 is also a translational repressor protein, it controls the translation of the L11 operon by binding to its mRNA. This chain is Large ribosomal subunit protein uL1, found in Stutzerimonas stutzeri (strain A1501) (Pseudomonas stutzeri).